A 219-amino-acid polypeptide reads, in one-letter code: Proteasome subunit beta 2 (219 aa).

Residues 1 to 25 constitute a propeptide, removed in mature form; by autocatalysis; the sequence is MAEWIAGGLEGPAGRGLDERVVRSG. Thr-26 (nucleophile) is an active-site residue.

The protein belongs to the peptidase T1B family. The 20S proteasome core is composed of 14 alpha and 14 beta subunits that assemble into four stacked heptameric rings, resulting in a barrel-shaped structure. The two inner rings, each composed of seven catalytic beta subunits, are sandwiched by two outer rings, each composed of seven alpha subunits. The catalytic chamber with the active sites is on the inside of the barrel. Has a gated structure, the ends of the cylinder being occluded by the N-termini of the alpha-subunits. Is capped at one or both ends by the proteasome regulatory ATPase, PAN.

It is found in the cytoplasm. The catalysed reaction is Cleavage of peptide bonds with very broad specificity.. With respect to regulation, the formation of the proteasomal ATPase PAN-20S proteasome complex, via the docking of the C-termini of PAN into the intersubunit pockets in the alpha-rings, triggers opening of the gate for substrate entry. Interconversion between the open-gate and close-gate conformations leads to a dynamic regulation of the 20S proteasome proteolysis activity. In terms of biological role, component of the proteasome core, a large protease complex with broad specificity involved in protein degradation. This Aeropyrum pernix (strain ATCC 700893 / DSM 11879 / JCM 9820 / NBRC 100138 / K1) protein is Proteasome subunit beta 2.